The sequence spans 609 residues: Membrane protein insertase YidC (609 aa).

The chain crosses the membrane as a helical span at residues 9–29 (IIAIVLSGLILIAWQYFYNIP). Residues 35 to 63 (RAAQQAQSQTAKSPTEPTPNSPKPDHPAA) are disordered. 4 helical membrane passes run 375–395 (VFGN…AIFF), 449–469 (LPMV…FVTI), 507–527 (LLGP…TMWF), and 546–566 (WMPV…VIYW).

This sequence belongs to the OXA1/ALB3/YidC family. Type 1 subfamily. In terms of assembly, interacts with the Sec translocase complex via SecD. Specifically interacts with transmembrane segments of nascent integral membrane proteins during membrane integration.

It is found in the cell inner membrane. Its function is as follows. Required for the insertion and/or proper folding and/or complex formation of integral membrane proteins into the membrane. Involved in integration of membrane proteins that insert both dependently and independently of the Sec translocase complex, as well as at least some lipoproteins. Aids folding of multispanning membrane proteins. This is Membrane protein insertase YidC from Nitrobacter hamburgensis (strain DSM 10229 / NCIMB 13809 / X14).